A 475-amino-acid chain; its full sequence is MTGQQPASLPPELARVHMVGIGGAGMSGVARILLDRGGQVSGSDAKDSRGLIALRARGAQVRIGHDPSALDMLPGGPTAVVTTHAAIPKTNPELVEARRRGIPVILRPAVLARLMDDRTSLLVTGTHGKTSTTSMIIVALQHCGFDPSFAVGGDLGQAGTNAHHGSGSTFVAEADESDGSLLEYSPDVAVVTNIEADHLDFYGTVENYTAVFDQFVDRIKPVGALVVCVDDPGAAALAERTAALGIRVLRYGSAPGLDATLLDWSQLGTGAVAEISVRAEDRPRTMRLSVPGRHMALNALGALLAATQAGADIDAVLDGLAGFDGVRRRFELVGTAGGVRVFDDYAHHPTEVRAAITALRAVAEQTPGARTVAVFQPHLYSRTETFATEFAASLSTADEVFVLDVYAAREQPLPGVSGATIADGVSAPVTYIADFSAVAARVAAVVSAGDVVVTMGAGDVTMLGQEILAEVRARA.

ATP is bound at residue 125–131 (GTHGKTS).

It belongs to the MurCDEF family.

It is found in the cytoplasm. It carries out the reaction UDP-N-acetyl-alpha-D-muramate + L-alanine + ATP = UDP-N-acetyl-alpha-D-muramoyl-L-alanine + ADP + phosphate + H(+). It participates in cell wall biogenesis; peptidoglycan biosynthesis. In terms of biological role, cell wall formation. This is UDP-N-acetylmuramate--L-alanine ligase from Mycolicibacterium gilvum (strain PYR-GCK) (Mycobacterium gilvum (strain PYR-GCK)).